The sequence spans 227 residues: ATP-dependent dethiobiotin synthetase BioD (227 aa).

13 to 18 (DIGKTY) provides a ligand contact to ATP. Position 17 (Thr17) interacts with Mg(2+). Residue Lys38 is part of the active site. Ser42 contributes to the substrate binding site. ATP-binding positions include Asp55, 116–119 (EGSG), and 179–180 (NN). 2 residues coordinate Mg(2+): Asp55 and Glu116.

Belongs to the dethiobiotin synthetase family. Homodimer. It depends on Mg(2+) as a cofactor.

It is found in the cytoplasm. It catalyses the reaction (7R,8S)-7,8-diammoniononanoate + CO2 + ATP = (4R,5S)-dethiobiotin + ADP + phosphate + 3 H(+). It participates in cofactor biosynthesis; biotin biosynthesis; biotin from 7,8-diaminononanoate: step 1/2. Functionally, catalyzes a mechanistically unusual reaction, the ATP-dependent insertion of CO2 between the N7 and N8 nitrogen atoms of 7,8-diaminopelargonic acid (DAPA, also called 7,8-diammoniononanoate) to form a ureido ring. This is ATP-dependent dethiobiotin synthetase BioD from Clostridium botulinum (strain Okra / Type B1).